A 222-amino-acid polypeptide reads, in one-letter code: Ras-related protein Rab-21 (222 aa).

At Ala-2 the chain carries N-acetylalanine. Positions 26, 29, 30, 31, 32, 43, 44, 46, 48, and 49 each coordinate GTP. Thr-31 serves as a coordination point for Mg(2+). Residues 41–54 (KFNDKHITTLQASF) carry the Switch 1 motif. 2 residues coordinate Mg(2+): Thr-49 and Asp-72. The Switch 2 signature appears at 74–92 (AGQERFHALGPIYYRDSNG). The GTP site is built by Gly-75, Asn-130, Lys-131, Asp-133, Ala-161, and Lys-162. Residues Cys-218 and Cys-219 are each lipidated (S-geranylgeranyl cysteine). Cys-219 is modified (cysteine methyl ester). Positions 220-222 (SSG) are cleaved as a propeptide — removed in mature form.

It belongs to the small GTPase superfamily. Rab family. As to quaternary structure, interacts with the cytoplasmic tail of integrins ITGA1, ITGA2, ITGA5, ITGA6, ITGA11 and ITGB1; this interaction is dependent upon its GDP/GTP cycle. Interacts with RABGEF1 (via VPS9 domain). Interacts with ANKRD27. Interacts with VAMP7. Interacts (in GTP-bound form) with VAMP8 in response to starvation; the interaction probably regulates VAMP8 endolysosomal trafficking. Interacts (active GTP-bound form) with TMED10; the interaction is indirect and regulates TMED10 abundance and localization at the Golgi. Mg(2+) is required as a cofactor.

It is found in the endoplasmic reticulum membrane. The protein localises to the golgi apparatus. The protein resides in the trans-Golgi network. Its subcellular location is the golgi apparatus membrane. It localises to the early endosome membrane. It is found in the cytoplasmic vesicle membrane. The protein localises to the cleavage furrow. The protein resides in the cell projection. Its subcellular location is the neuron projection. The enzyme catalyses GTP + H2O = GDP + phosphate + H(+). Regulated by guanine nucleotide exchange factors (GEFs) including ANKRD27 and RABGEF1, which promote the exchange of bound GDP for free GTP. Regulated by GTPase activating proteins (GAPs) which increase the GTP hydrolysis activity. Inhibited by GDP dissociation inhibitors (GDIs). Its function is as follows. The small GTPases Rab are key regulators of intracellular membrane trafficking, from the formation of transport vesicles to their fusion with membranes. Rabs cycle between an inactive GDP-bound form and an active GTP-bound form that is able to recruit to membranes different sets of downstream effectors directly responsible for vesicle formation, movement, tethering and fusion. RAB21 is involved in membrane trafficking control. Regulates integrin internalization and recycling, but does not influence the traffic of endosomally translocated receptors in general. As a result, may regulate cell adhesion and migration. During the mitosis of adherent cells, controls the endosomal trafficking of integrins which is required for the successful completion of cytokinesis. Involved in neurite growth. Following SBF2/MTMT13-mediated activation in response to starvation-induced autophagy, binds to and regulates SNARE protein VAMP8 endolysosomal transport required for SNARE-mediated autophagosome-lysosome fusion. Modulates protein levels of the cargo receptors TMED2 and TMED10, and required for appropriate Golgi localization of TMED10. This is Ras-related protein Rab-21 from Mus musculus (Mouse).